The primary structure comprises 278 residues: Cytidine kinase (278 aa).

Residue 203-208 coordinates ATP; it reads TRGEKG. D237 acts as the Proton acceptor in catalysis.

The protein belongs to the carbohydrate kinase PfkB family. It depends on Mg(2+) as a cofactor.

It carries out the reaction cytidine + ATP = CMP + ADP + H(+). In terms of biological role, involved in nucleoside degradation. Phosphorylates cytidine to CMP. Can also act on deoxycytidine and uridine, but is most active with cytidine. ATP is the most preferred phosphate donor, but it can also use GTP, CTP or UTP. The sequence is that of Cytidine kinase from Thermococcus kodakarensis (strain ATCC BAA-918 / JCM 12380 / KOD1) (Pyrococcus kodakaraensis (strain KOD1)).